A 68-amino-acid chain; its full sequence is Putative alpha-conotoxin Qc alphaL-1 (68 aa).

The N-terminal stretch at 1–21 is a signal peptide; sequence MGMRMMFTMFLLVVLATTVVS. Positions 22-49 are excised as a propeptide; that stretch reads INLDHAFDGRNAAANNKATDLMARTVRR. The cysteines at positions 51 and 64 are disulfide-linked.

It belongs to the conotoxin A superfamily. As to expression, expressed by the venom duct.

It localises to the secreted. In terms of biological role, alpha-conotoxins act on postsynaptic membranes, they bind to the nicotinic acetylcholine receptors (nAChR) and thus inhibit them. This Conus quercinus (Oak cone) protein is Putative alpha-conotoxin Qc alphaL-1.